The primary structure comprises 120 residues: NADH dehydrogenase [ubiquinone] 1 subunit C2 (120 aa).

The helical transmembrane segment at 57–76 (GLHRQLLFVTSFVFAGYFYL) threads the bilayer.

This sequence belongs to the complex I NDUFC2 subunit family. In terms of assembly, complex I is composed of 45 different subunits. Interacts with TMEM242.

The protein localises to the mitochondrion inner membrane. Its function is as follows. Accessory subunit of the mitochondrial membrane respiratory chain NADH dehydrogenase (Complex I), that is believed not to be involved in catalysis but required for the complex assembly. Complex I functions in the transfer of electrons from NADH to the respiratory chain. The immediate electron acceptor for the enzyme is believed to be ubiquinone. This Mus musculus (Mouse) protein is NADH dehydrogenase [ubiquinone] 1 subunit C2.